A 79-amino-acid polypeptide reads, in one-letter code: Acyl carrier protein (79 aa).

A Carrier domain is found at 2-77; the sequence is SEVADKVKKI…DAVEYIEKQK (76 aa). Residue Ser37 is modified to O-(pantetheine 4'-phosphoryl)serine.

The protein belongs to the acyl carrier protein (ACP) family. In terms of processing, 4'-phosphopantetheine is transferred from CoA to a specific serine of apo-ACP by AcpS. This modification is essential for activity because fatty acids are bound in thioester linkage to the sulfhydryl of the prosthetic group.

Its subcellular location is the cytoplasm. It functions in the pathway lipid metabolism; fatty acid biosynthesis. In terms of biological role, carrier of the growing fatty acid chain in fatty acid biosynthesis. The protein is Acyl carrier protein of Granulibacter bethesdensis (strain ATCC BAA-1260 / CGDNIH1).